A 311-amino-acid chain; its full sequence is Elongation factor Ts (311 aa).

Positions Thr81–Val84 are involved in Mg(2+) ion dislocation from EF-Tu.

It belongs to the EF-Ts family.

It localises to the cytoplasm. Its function is as follows. Associates with the EF-Tu.GDP complex and induces the exchange of GDP to GTP. It remains bound to the aminoacyl-tRNA.EF-Tu.GTP complex up to the GTP hydrolysis stage on the ribosome. The protein is Elongation factor Ts of Trichlorobacter lovleyi (strain ATCC BAA-1151 / DSM 17278 / SZ) (Geobacter lovleyi).